Reading from the N-terminus, the 282-residue chain is Small ribosomal subunit protein uS2 (282 aa).

The segment at 260–282 (KRRRSKVYKEEEREVVTNEDESR) is disordered. Residues 266–282 (VYKEEEREVVTNEDESR) show a composition bias toward basic and acidic residues.

It belongs to the universal ribosomal protein uS2 family.

The chain is Small ribosomal subunit protein uS2 from Wolbachia sp. subsp. Drosophila simulans (strain wRi).